The following is a 648-amino-acid chain: Threonine--tRNA ligase (648 aa).

A TGS domain is found at Met-1–Thr-61. The tract at residues Asp-240–Pro-539 is catalytic. The Zn(2+) site is built by Cys-335, His-386, and His-516.

Belongs to the class-II aminoacyl-tRNA synthetase family. In terms of assembly, homodimer. It depends on Zn(2+) as a cofactor.

The protein localises to the cytoplasm. It carries out the reaction tRNA(Thr) + L-threonine + ATP = L-threonyl-tRNA(Thr) + AMP + diphosphate + H(+). Functionally, catalyzes the attachment of threonine to tRNA(Thr) in a two-step reaction: L-threonine is first activated by ATP to form Thr-AMP and then transferred to the acceptor end of tRNA(Thr). Also edits incorrectly charged L-seryl-tRNA(Thr). The chain is Threonine--tRNA ligase from Flavobacterium johnsoniae (strain ATCC 17061 / DSM 2064 / JCM 8514 / BCRC 14874 / CCUG 350202 / NBRC 14942 / NCIMB 11054 / UW101) (Cytophaga johnsonae).